The following is a 185-amino-acid chain: Elongation factor P (185 aa).

It belongs to the elongation factor P family.

It is found in the cytoplasm. It participates in protein biosynthesis; polypeptide chain elongation. In terms of biological role, involved in peptide bond synthesis. Stimulates efficient translation and peptide-bond synthesis on native or reconstituted 70S ribosomes in vitro. Probably functions indirectly by altering the affinity of the ribosome for aminoacyl-tRNA, thus increasing their reactivity as acceptors for peptidyl transferase. The sequence is that of Elongation factor P (efp) from Lactococcus lactis subsp. lactis (strain IL1403) (Streptococcus lactis).